We begin with the raw amino-acid sequence, 1220 residues long: Plasma membrane calcium-transporting ATPase 1 (1220 aa).

At Gly2 the chain carries N-acetylglycine. Residues 2-105 (GDMANNSVVY…KTFLQLVWEA (104 aa)) lie on the Cytoplasmic side of the membrane. Phosphoserine is present on residues Ser8 and Ser17. A helical transmembrane segment spans residues 106-126 (LQDVTLIILEIAAIVSLGLSF). Topologically, residues 127 to 154 (YQPPEGDNALCGEVSVGEEEGEGETGWI) are extracellular. Residues 155–175 (EGAAILLSVVCVVLVTAFNDW) traverse the membrane as a helical segment. Residues 176 to 366 (SKEKQFRGLQ…KEKSVLQGKL (191 aa)) are Cytoplasmic-facing. The interval 297-356 (EEEKKDEKKKEKKNKKQDGAIENRNKAKAQDGEPMEMQPLKSEEGGDGDEKDKKKANLPK) is disordered. 2 stretches are compositionally biased toward basic and acidic residues: residues 312 to 327 (KQDG…KAQD) and 337 to 356 (KSEE…NLPK). Residue Ser338 is modified to Phosphoserine. The chain crosses the membrane as a helical span at residues 367–386 (TKLAVQIGKAGLLMSAITVI). At 387–418 (ILVLYFLIDTFWVQKRPWLAECTPIYIQYFVK) the chain is on the extracellular side. The chain crosses the membrane as a helical span at residues 419–439 (FFIIGVTVLVVAVPEGLPLPV). The Cytoplasmic segment spans residues 440–855 (TISLAYSVNE…RNVYDSISKF (416 aa)). The active-site 4-aspartylphosphate intermediate is Asp475. The Mg(2+) site is built by Asp475, Thr477, and Asp797. A helical membrane pass occupies residues 856–876 (LQFQLTVNVVAVIVAFTGACI). Over 877–882 (TQDSPL) the chain is Extracellular. The chain crosses the membrane as a helical span at residues 883–903 (KAVQMLWVNLIMDTLASLALA). The Cytoplasmic segment spans residues 904 to 927 (TEPPTESLLLGKPYGRNKPLISRT). A helical transmembrane segment spans residues 928 to 948 (MMKNILGHAFYQLVVVFTLLL). The Extracellular segment spans residues 949–971 (AGEKFFDIDSGRNAPLHAPPSEH). A helical transmembrane segment spans residues 972–991 (YTIVFNIFVLMQLFNEINAR). At 992-1005 (KIHGERNVFEGIFN) the chain is on the cytoplasmic side. A helical membrane pass occupies residues 1006–1027 (NAIFCTIVLGTFVVQIIIVQFA). Topologically, residues 1028–1039 (GKPFSCSELSVE) are extracellular. A helical transmembrane segment spans residues 1040-1060 (QWLWSIFLGMGTLLWGQLIST). The Cytoplasmic portion of the chain corresponds to 1061–1220 (IPTSRLKFQK…SPLHSLETSL (160 aa)). The segment at 1100–1117 (LRRWQILWFRGLNRIQTQ) is calmodulin-binding subdomain A. The residue at position 1116 (Thr1116) is a Phosphothreonine; by PKC. The segment at 1118 to 1220 (IRVVNAFRSS…SPLHSLETSL (103 aa)) is required for basolateral membrane targeting. 2 positions are modified to phosphoserine: Ser1140 and Ser1155. The segment at 1160 to 1220 (PLIDDTDAED…SPLHSLETSL (61 aa)) is disordered. Thr1165 is subject to Phosphothreonine. Ser1177 is modified (phosphoserine; by PKA). Phosphoserine is present on residues Ser1178 and Ser1182. Over residues 1200-1220 (MNKSATSSSPGSPLHSLETSL) the composition is skewed to polar residues.

Belongs to the cation transport ATPase (P-type) (TC 3.A.3) family. Type IIB subfamily. As to quaternary structure, monomer. Dimer. Oligomer. Calmodulin binding. Interacts with PDZD11. Interacts with SLC35G1 and STIM1. Interacts with YWHAE; interacts with the monomeric and dimeric forms of the YWHAE but prefer the monomer form; this interaction inhibits calcium-transporting ATPase activity. Interacts with NPTN; this interaction stabilizes ATP2B1 and increases ATPase activity; this interaction controls T cell calcium homeostasis following T cell activation. Interacts with EPB41; regulates small intestinal calcium absorption through regulation of membrane expression of ATP2B1. Isoform B is ubiquitously expressed and is the most predominant isoform. Isoform C is expressed at much lower levels in all tissues tested, but liver, while isoform A is found only in aorta, brain and stomach.

It is found in the cell membrane. The protein localises to the basolateral cell membrane. It localises to the synapse. The protein resides in the presynaptic cell membrane. Its subcellular location is the cytoplasmic vesicle. It is found in the secretory vesicle. The protein localises to the synaptic vesicle membrane. It catalyses the reaction Ca(2+)(in) + ATP + H2O = Ca(2+)(out) + ADP + phosphate + H(+). Its function is as follows. Catalyzes the hydrolysis of ATP coupled with the transport of calcium from the cytoplasm to the extracellular space thereby maintaining intracellular calcium homeostasis. Plays a role in blood pressure regulation through regulation of intracellular calcium concentration and nitric oxide production leading to regulation of vascular smooth muscle cells vasoconstriction. Positively regulates bone mineralization through absorption of calcium from the intestine. Plays dual roles in osteoclast differentiation and survival by regulating RANKL-induced calcium oscillations in preosteoclasts and mediating calcium extrusion in mature osteoclasts. Regulates insulin sensitivity through calcium/calmodulin signaling pathway by regulating AKT1 activation and NOS3 activation in endothelial cells. May play a role in synaptic transmission by modulating calcium and proton dynamics at the synaptic vesicles. This Oryctolagus cuniculus (Rabbit) protein is Plasma membrane calcium-transporting ATPase 1.